A 101-amino-acid chain; its full sequence is Urease subunit beta (101 aa).

It belongs to the urease beta subunit family. In terms of assembly, heterotrimer of UreA (gamma), UreB (beta) and UreC (alpha) subunits. Three heterotrimers associate to form the active enzyme.

It is found in the cytoplasm. It carries out the reaction urea + 2 H2O + H(+) = hydrogencarbonate + 2 NH4(+). The protein operates within nitrogen metabolism; urea degradation; CO(2) and NH(3) from urea (urease route): step 1/1. The polypeptide is Urease subunit beta (Thermosynechococcus vestitus (strain NIES-2133 / IAM M-273 / BP-1)).